Here is a 734-residue protein sequence, read N- to C-terminus: Photosystem I P700 chlorophyll a apoprotein A2 (734 aa).

The next 8 membrane-spanning stretches (helical) occupy residues 46-69 (IFAS…FHVA), 135-158 (LYTG…LHLQ), 175-199 (LNHH…HVAI), 273-291 (IAHH…GHMY), 330-353 (VHFQ…QHMY), 369-395 (AALY…IFFI), 417-439 (AIIS…LYVH), and 517-535 (FLVH…LILV). [4Fe-4S] cluster is bound by residues Cys-559 and Cys-568. Helical transmembrane passes span 575 to 596 (AFYL…YWHW) and 643 to 665 (LSVW…MFLI). Chlorophyll a-binding residues include His-654, Met-662, and Tyr-670. Trp-671 contributes to the phylloquinone binding site. A helical transmembrane segment spans residues 707-727 (LVGLAHFSVGYIFTYAAFLIA).

The protein belongs to the PsaA/PsaB family. As to quaternary structure, the PsaA/B heterodimer binds the P700 chlorophyll special pair and subsequent electron acceptors. PSI consists of a core antenna complex that captures photons, and an electron transfer chain that converts photonic excitation into a charge separation. The eukaryotic PSI reaction center is composed of at least 11 subunits. The cofactor is P700 is a chlorophyll a/chlorophyll a' dimer, A0 is one or more chlorophyll a, A1 is one or both phylloquinones and FX is a shared 4Fe-4S iron-sulfur center..

Its subcellular location is the plastid. It is found in the chloroplast thylakoid membrane. It carries out the reaction reduced [plastocyanin] + hnu + oxidized [2Fe-2S]-[ferredoxin] = oxidized [plastocyanin] + reduced [2Fe-2S]-[ferredoxin]. In terms of biological role, psaA and PsaB bind P700, the primary electron donor of photosystem I (PSI), as well as the electron acceptors A0, A1 and FX. PSI is a plastocyanin-ferredoxin oxidoreductase, converting photonic excitation into a charge separation, which transfers an electron from the donor P700 chlorophyll pair to the spectroscopically characterized acceptors A0, A1, FX, FA and FB in turn. Oxidized P700 is reduced on the lumenal side of the thylakoid membrane by plastocyanin. This is Photosystem I P700 chlorophyll a apoprotein A2 from Platanus occidentalis (Sycamore).